Here is a 1117-residue protein sequence, read N- to C-terminus: Isoleucine--tRNA ligase (1117 aa).

Positions 64–74 (PFANGLPHYGH) match the 'HIGH' region motif. Positions 647–651 (KLSKR) match the 'KMSKS' region motif. K650 contacts ATP.

This sequence belongs to the class-I aminoacyl-tRNA synthetase family. IleS type 2 subfamily. As to quaternary structure, monomer. The cofactor is Zn(2+).

It localises to the cytoplasm. It carries out the reaction tRNA(Ile) + L-isoleucine + ATP = L-isoleucyl-tRNA(Ile) + AMP + diphosphate. In terms of biological role, catalyzes the attachment of isoleucine to tRNA(Ile). As IleRS can inadvertently accommodate and process structurally similar amino acids such as valine, to avoid such errors it has two additional distinct tRNA(Ile)-dependent editing activities. One activity is designated as 'pretransfer' editing and involves the hydrolysis of activated Val-AMP. The other activity is designated 'posttransfer' editing and involves deacylation of mischarged Val-tRNA(Ile). This chain is Isoleucine--tRNA ligase, found in Ehrlichia ruminantium (strain Welgevonden).